The following is a 138-amino-acid chain: Large ribosomal subunit protein uL16 (138 aa).

Residues 1–15 (MLSPKKVKYRKKQRG) show a composition bias toward basic residues. The interval 1–20 (MLSPKKVKYRKKQRGRLSGE) is disordered.

It belongs to the universal ribosomal protein uL16 family. Part of the 50S ribosomal subunit.

Functionally, binds 23S rRNA and is also seen to make contacts with the A and possibly P site tRNAs. This chain is Large ribosomal subunit protein uL16, found in Borrelia hermsii (strain HS1 / DAH).